A 377-amino-acid polypeptide reads, in one-letter code: Homoserine O-succinyltransferase (377 aa).

Residues 50–359 (NAVLVCHALS…SSHGHDSFLM (310 aa)) form the AB hydrolase-1 domain. Ser-156 acts as the Nucleophile in catalysis. Arg-226 is a substrate binding site. Residues Asp-321 and His-354 contribute to the active site. Asp-355 is a binding site for substrate.

Belongs to the AB hydrolase superfamily. MetX family. Homodimer.

It localises to the cytoplasm. It catalyses the reaction L-homoserine + succinyl-CoA = O-succinyl-L-homoserine + CoA. Its pathway is amino-acid biosynthesis; L-methionine biosynthesis via de novo pathway; O-succinyl-L-homoserine from L-homoserine: step 1/1. Functionally, transfers a succinyl group from succinyl-CoA to L-homoserine, forming succinyl-L-homoserine. The protein is Homoserine O-succinyltransferase of Nitrosospira multiformis (strain ATCC 25196 / NCIMB 11849 / C 71).